The chain runs to 129 residues: NADH-ubiquinone oxidoreductase chain 3 (129 aa).

3 helical membrane passes run Phe-4 to Ala-24, Ala-48 to Ile-68, and Gly-82 to Leu-102.

It belongs to the complex I subunit 3 family.

It localises to the mitochondrion membrane. It carries out the reaction a ubiquinone + NADH + 5 H(+)(in) = a ubiquinol + NAD(+) + 4 H(+)(out). Functionally, core subunit of the mitochondrial membrane respiratory chain NADH dehydrogenase (Complex I) that is believed to belong to the minimal assembly required for catalysis. Complex I functions in the transfer of electrons from NADH to the respiratory chain. The immediate electron acceptor for the enzyme is believed to be ubiquinone. The chain is NADH-ubiquinone oxidoreductase chain 3 (NAD3) from Candida albicans (strain SC5314 / ATCC MYA-2876) (Yeast).